Here is a 763-residue protein sequence, read N- to C-terminus: Disintegrin and metalloproteinase domain-containing protein 29 (763 aa).

The signal sequence occupies residues 1 to 31 (MNMIEALLSMRVLFLTQVFGIFLCFPGLTKA). The propeptide occupies 32–200 (GHLHYHSSIE…ILKQSSFEDW (169 aa)). 3 N-linked (GlcNAc...) asparagine glycosylation sites follow: Asn-164, Asn-177, and Asn-223. Over 201 to 684 (WTHTKIVELV…KTNKKKHFFY (484 aa)) the chain is Extracellular. Residues 205 to 396 (KIVELVVVVD…NTRCLMENMY (192 aa)) form the Peptidase M12B domain. Disulfide bonds link Cys-313–Cys-390, Cys-353–Cys-375, and Cys-355–Cys-360. N-linked (GlcNAc...) asparagine glycans are attached at residues Asn-374, Asn-424, Asn-434, Asn-475, and Asn-584. Residues 403 to 489 (RTRCGNGVVE…ECPDDAYVED (87 aa)) form the Disintegrin domain. Cys-461 and Cys-481 are joined by a disulfide. Intrachain disulfides connect Cys-631–Cys-642, Cys-636–Cys-648, and Cys-650–Cys-659. The EGF-like domain occupies 631-660 (CTPAFCNYRGICNNKHHCHCNFHWDPPNCM). A helical membrane pass occupies residues 685–705 (LLLLQLIILACLLSCLLWLLF). Over 706 to 763 (NIKGSKRKPQVQPTPVKTKKVSKKVPSQKPSPVPSPSLPQLRMPSRSASPTSSIKSTN) the chain is Cytoplasmic. Residues 712–763 (RKPQVQPTPVKTKKVSKKVPSQKPSPVPSPSLPQLRMPSRSASPTSSIKSTN) form a disordered region. Residues 751 to 763 (RSASPTSSIKSTN) are compositionally biased toward polar residues.

The protein localises to the membrane. Its function is as follows. May be involved in spermatogenesis and fertilization. Seems to be a non catalytic metalloprotease-like protein. In Mus musculus (Mouse), this protein is Disintegrin and metalloproteinase domain-containing protein 29 (Adam29).